Consider the following 446-residue polypeptide: Probable D-serine dehydratase (446 aa).

At Lys118 the chain carries N6-(pyridoxal phosphate)lysine.

This sequence belongs to the serine/threonine dehydratase family. DsdA subfamily. Pyridoxal 5'-phosphate is required as a cofactor.

The catalysed reaction is D-serine = pyruvate + NH4(+). The protein is Probable D-serine dehydratase of Ectopseudomonas mendocina (strain ymp) (Pseudomonas mendocina).